A 158-amino-acid polypeptide reads, in one-letter code: Transcription elongation factor GreA (158 aa).

A coiled-coil region spans residues 4–75 (EKTYPMTQEG…TQLENMIRNA (72 aa)).

It belongs to the GreA/GreB family.

Its function is as follows. Necessary for efficient RNA polymerase transcription elongation past template-encoded arresting sites. The arresting sites in DNA have the property of trapping a certain fraction of elongating RNA polymerases that pass through, resulting in locked ternary complexes. Cleavage of the nascent transcript by cleavage factors such as GreA or GreB allows the resumption of elongation from the new 3'terminus. GreA releases sequences of 2 to 3 nucleotides. The sequence is that of Transcription elongation factor GreA from Bacillus anthracis (strain A0248).